Consider the following 538-residue polypeptide: Pyruvate kinase (538 aa).

Serine 45 carries the post-translational modification Phosphoserine. Arginine 72 lines the substrate pocket. K(+)-binding residues include asparagine 74, serine 76, aspartate 107, and threonine 108. 74–77 serves as a coordination point for ATP; sequence NFSH. Residues arginine 114 and lysine 200 each coordinate ATP. Glutamate 265 serves as a coordination point for Mg(2+). 3 residues coordinate substrate: glycine 288, aspartate 289, and threonine 321. Aspartate 289 contributes to the Mg(2+) binding site.

This sequence belongs to the pyruvate kinase family. As to quaternary structure, homotetramer. Requires Mg(2+) as cofactor. The cofactor is K(+).

It carries out the reaction pyruvate + ATP = phosphoenolpyruvate + ADP + H(+). It functions in the pathway carbohydrate degradation; glycolysis; pyruvate from D-glyceraldehyde 3-phosphate: step 5/5. This Hypocrea jecorina (Trichoderma reesei) protein is Pyruvate kinase (pki1).